The sequence spans 2614 residues: Talin-B (2614 aa).

The FERM domain maps to 85-369 (RPLKVRLMDE…GYIEILMKKR (285 aa)). The tract at residues 393-421 (RGQTSQATTSSSLSGYDGNGGREGQYSAP) is disordered. Residues 395-406 (QTSQATTSSSLS) are compositionally biased toward low complexity. Coiled-coil stretches lie at residues 1938 to 1965 (TQNI…ASGK) and 2033 to 2057 (NKAI…LVQS). Positions 2219–2460 (LLFAAGESLE…SIRKKEYSDQ (242 aa)) constitute an I/LWEQ domain. The interval 2454–2557 (KKEYSDQTGN…AAPTAAAPNK (104 aa)) is disordered. Residues 2473-2487 (KPTTSISVGITPTKR) are compositionally biased toward polar residues. The span at 2517–2537 (KKPAPSQAPSSPVAPVSAPVS) shows a compositional bias: low complexity. The span at 2538 to 2548 (KPSPKPAPKPA) shows a compositional bias: pro residues. Residues 2553–2614 (AAPNKTYTLE…NNIKTKLGLF (62 aa)) form the HP domain.

It is found in the cytoplasm. It localises to the cytoskeleton. The protein localises to the cell cortex. In terms of biological role, actin-binding protein required for multicellular morphogenesis. Substrate of pkgB and/or pkbA. The sequence is that of Talin-B (talB) from Dictyostelium discoideum (Social amoeba).